A 599-amino-acid polypeptide reads, in one-letter code: Dachshund homolog 2 (599 aa).

Residues 69-155 (RMVDMHGMKV…LITRKDFETL (87 aa)) form a DACHbox-N region. 3 disordered regions span residues 166-186 (RQMT…PKRS), 237-280 (LQGN…GPQH), and 370-409 (RIPE…MDHH). The span at 237-262 (LQGNGSQNGTESEPDDLNSNTGGSES) shows a compositional bias: polar residues. Positions 389–405 (SQTSSHTSSSVSSSPSQ) are enriched in low complexity. Residues 453 to 533 (SSVETLLTNI…KTKRKLQEAL (81 aa)) form a DACHbox-C region. Positions 459–554 (LTNIQGLLKV…QALKQATTSD (96 aa)) form a coiled coil.

Belongs to the DACH/dachshund family. As to quaternary structure, interacts with SIX6 and EYA2.

The protein localises to the nucleus. Functionally, transcription factor that is involved in regulation of organogenesis. Seems to be a regulator for SIX1 and SIX6. Seems to act as a corepressor of SIX6 in regulating proliferation by directly repressing cyclin-dependent kinase inhibitors, including the p27Kip1 promoter. Is recruited with SIX6 to the p27Kip1 promoter in embryonal retina. SIX6 corepression also seems to involve NCOR1, TBL1, HDAC1 and HDAC3. May be involved together with PAX3, SIX1, and EYA2 in regulation of myogenesis. In the developing somite, expression of DACH2 and PAX3 is regulated by the overlying ectoderm, and DACH2 and PAX3 positively regulate each other's expression. Probably binds to DNA via its DACHbox-N domain. The chain is Dachshund homolog 2 (DACH2) from Homo sapiens (Human).